We begin with the raw amino-acid sequence, 550 residues long: Methionine--tRNA ligase (550 aa).

The short motif at 12–22 is the 'HIGH' region element; sequence PYANGPLHFGH. 4 residues coordinate Zn(2+): Cys144, Cys147, Cys157, and Cys160. The 'KMSKS' region signature appears at 330 to 334; that stretch reads QFSKS. Lys333 is an ATP binding site.

This sequence belongs to the class-I aminoacyl-tRNA synthetase family. MetG type 1 subfamily. As to quaternary structure, monomer. Zn(2+) serves as cofactor.

It localises to the cytoplasm. The catalysed reaction is tRNA(Met) + L-methionine + ATP = L-methionyl-tRNA(Met) + AMP + diphosphate. Its function is as follows. Is required not only for elongation of protein synthesis but also for the initiation of all mRNA translation through initiator tRNA(fMet) aminoacylation. This Chlamydia caviae (strain ATCC VR-813 / DSM 19441 / 03DC25 / GPIC) (Chlamydophila caviae) protein is Methionine--tRNA ligase.